A 1087-amino-acid polypeptide reads, in one-letter code: Formin-H (1087 aa).

Positions Met1–Leu23 are enriched in polar residues. A disordered region spans residues Met1–Ser25. The 361-residue stretch at Val34 to Pro394 folds into the GBD/FH3 domain. Low complexity-rich tracts occupy residues Phe416–Lys436 and Ser549–Pro558. Disordered regions lie at residues Phe416–Glu445, Ser549–Pro625, and Val1048–Lys1087. Residues Ser433 to Ser461 adopt a coiled-coil conformation. The span at Phe569–Glu588 shows a compositional bias: polar residues. Residues Pro589 to Pro615 enclose the FH1 domain. Residues Gly592–Gly616 show a composition bias toward pro residues. In terms of domain architecture, FH2 spans Ala623–Lys1016. The 39-residue stretch at Asp1013–Leu1051 folds into the DAD domain.

It belongs to the formin homology family. Diaphanous subfamily. In terms of assembly, interacts with vasP, proB/profilin-2 and rac1A. Interacts (via GBD/FH3 domain) with activated Rho-GTPases.

The protein localises to the cytoplasm. The protein resides in the cell cortex. Its subcellular location is the cytoskeleton. Formins play an important role in the nucleation of actin and the formation of linear actin filaments. Important for cell migration and formation, elongation and maintenance of filopodia. Specifically controls filopodial dynamics by regulating actin turnover at the barbed ends of actin filaments. This is Formin-H (forH) from Dictyostelium discoideum (Social amoeba).